Here is a 1679-residue protein sequence, read N- to C-terminus: Maestro heat-like repeat-containing protein family member 2A (1679 aa).

15 HEAT repeats span residues 68 to 91 (ATTD…ISTQ), 92 to 128 (RKMN…QMRD), 190 to 229 (MPYM…TVQF), 293 to 313 (EQVY…GHWP), 314 to 350 (LFPS…ELHV), 380 to 417 (SYPK…ADDP), 422 to 459 (KTIY…SGFQ), 571 to 610 (PAPQ…SIAP), 614 to 654 (DMWE…SLKK), 737 to 774 (KTVL…ETVK), 848 to 887 (SALT…MKPF), 991 to 1028 (GQFG…LHVS), 1219 to 1261 (DPLM…SHGP), 1387 to 1425 (KLLR…GAPR), and 1632 to 1669 (MDLV…CNQH).

This Mus musculus (Mouse) protein is Maestro heat-like repeat-containing protein family member 2A (Mroh2a).